The following is a 30-amino-acid chain: Platelet factor 4 (30 aa).

It belongs to the intercrine alpha (chemokine CxC) family. Homotetramer. Interacts with TNFAIP6 (via Link domain). Interacts with CCR1. Interacts with CXCR3. Binds non-covalently to a proteoglycan molecule.

The protein localises to the secreted. Chemokine released during platelet aggregation that plays a role in different biological processes including hematopoiesis, cell proliferation, differentiation, and activation. Acts via different functional receptors including CCR1, CXCR3A or CXCR3B. Upon interaction with CXCR3A receptor, induces activated T-lymphocytes migration mediated via downstream Ras/extracellular signal-regulated kinase (ERK) signaling. Neutralizes the anticoagulant effect of heparin by binding more strongly to heparin than to the chondroitin-4-sulfate chains of the carrier molecule. Plays a role in the inhibition of hematopoiesis and in the maintenance of hematopoietic stem cell (HSC) quiescence. Chemotactic for neutrophils and monocytes via CCR1. Inhibits endothelial cell proliferation. In cooperation with toll-like receptor 8/TLR8, induces chromatin remodeling and activates inflammatory gene expression via the TBK1-IRF5 axis. In addition, induces myofibroblast differentiation and collagen synthesis in different precursor cells, including endothelial cells, by stimulating endothelial-to-mesenchymal transition. The polypeptide is Platelet factor 4 (PF4) (Oryctolagus cuniculus (Rabbit)).